The chain runs to 510 residues: NAD(P)H-quinone oxidoreductase subunit 2 B, chloroplastic (510 aa).

12 consecutive transmembrane segments (helical) span residues leucine 24 to leucine 44, tryptophan 59 to tryptophan 79, isoleucine 99 to isoleucine 119, methionine 124 to cysteine 144, leucine 149 to tyrosine 169, tyrosine 183 to glycine 203, isoleucine 229 to phenylalanine 249, tryptophan 295 to isoleucine 315, methionine 323 to aspartate 343, tyrosine 354 to leucine 374, alanine 395 to phenylalanine 415, and leucine 418 to leucine 438.

Belongs to the complex I subunit 2 family. In terms of assembly, NDH is composed of at least 16 different subunits, 5 of which are encoded in the nucleus.

The protein localises to the plastid. It is found in the chloroplast thylakoid membrane. It catalyses the reaction a plastoquinone + NADH + (n+1) H(+)(in) = a plastoquinol + NAD(+) + n H(+)(out). The catalysed reaction is a plastoquinone + NADPH + (n+1) H(+)(in) = a plastoquinol + NADP(+) + n H(+)(out). NDH shuttles electrons from NAD(P)H:plastoquinone, via FMN and iron-sulfur (Fe-S) centers, to quinones in the photosynthetic chain and possibly in a chloroplast respiratory chain. The immediate electron acceptor for the enzyme in this species is believed to be plastoquinone. Couples the redox reaction to proton translocation, and thus conserves the redox energy in a proton gradient. This Lolium perenne (Perennial ryegrass) protein is NAD(P)H-quinone oxidoreductase subunit 2 B, chloroplastic.